The sequence spans 345 residues: KH domain-containing, RNA-binding, signal transduction-associated protein 2 (345 aa).

In terms of domain architecture, KH spans 65–131 (LIPVKQYPKF…AKHAHLSDEL (67 aa)). Disordered regions lie at residues 178–224 (LNGS…TRGA) and 321–345 (SRST…YGRY). A compositionally biased stretch (basic and acidic residues) spans 336 to 345 (GYREHPYGRY).

Belongs to the KHDRBS family.

The protein resides in the nucleus. RNA-binding protein that plays a role in the regulation of alternative splicing. The sequence is that of KH domain-containing, RNA-binding, signal transduction-associated protein 2 (khdrbs2) from Xenopus tropicalis (Western clawed frog).